A 97-amino-acid chain; its full sequence is Small ribosomal subunit protein eS25 (97 aa).

The segment at Met-1–Ala-24 is disordered. Residues Lys-9–Gly-18 show a composition bias toward basic residues.

This sequence belongs to the eukaryotic ribosomal protein eS25 family. As to quaternary structure, component of the small ribosomal subunit (SSU). Mature N.crassa ribosomes consist of a small (40S) and a large (60S) subunit. The 40S small subunit contains 1 molecule of ribosomal RNA (18S rRNA) and at least 32 different proteins. The large 60S subunit contains 3 rRNA molecules (26S, 5.8S and 5S rRNA) and at least 42 different proteins.

The protein localises to the cytoplasm. Its function is as follows. Component of the ribosome, a large ribonucleoprotein complex responsible for the synthesis of proteins in the cell. The small ribosomal subunit (SSU) binds messenger RNAs (mRNAs) and translates the encoded message by selecting cognate aminoacyl-transfer RNA (tRNA) molecules. The large subunit (LSU) contains the ribosomal catalytic site termed the peptidyl transferase center (PTC), which catalyzes the formation of peptide bonds, thereby polymerizing the amino acids delivered by tRNAs into a polypeptide chain. The nascent polypeptides leave the ribosome through a tunnel in the LSU and interact with protein factors that function in enzymatic processing, targeting, and the membrane insertion of nascent chains at the exit of the ribosomal tunnel. The chain is Small ribosomal subunit protein eS25 (rps-25) from Neurospora crassa (strain ATCC 24698 / 74-OR23-1A / CBS 708.71 / DSM 1257 / FGSC 987).